The following is a 2321-amino-acid chain: Major viral transcription factor ICP4 homolog (2321 aa).

Disordered stretches follow at residues 19–183, 296–329, 350–438, 954–1180, 1360–1392, 1597–1841, and 2277–2321; these read GIFP…SPPL, ILHT…PAPI, EFIQ…PSLG, MDDD…SGLA, DNSS…APPH, LLND…PSCY, and QHEE…TFTD. The span at 114-147 shows a compositional bias: low complexity; it reads SSNRPGGRNSSNGADESGESSSDRSPSYSPCDSY. 2 stretches are compositionally biased toward pro residues: residues 302–329 and 355–367; these read PTPP…PAPI and QSPP…PSPP. Low complexity predominate over residues 368-389; that stretch reads AHSSSSCSPSHLAPSPLSSSPL. A compositionally biased stretch (pro residues) spans 390 to 410; it reads SSPPQLSPAPVSPPSSPPPLS. 2 stretches are compositionally biased toward polar residues: residues 424–433 and 1002–1011; these read SISSQPQSCP and PRLTTPSSGR. Over residues 1031 to 1093 the composition is skewed to low complexity; it reads PETSPSNEHI…PSSPSSSRSP (63 aa). Residues 1151–1161 show a composition bias toward basic residues; it reads GGGRPRGRPPK. 2 stretches are compositionally biased toward polar residues: residues 1169 to 1180 and 1371 to 1389; these read NDIQVTSSSGLA and SKPS…QTTA. Positions 1630-1644 are enriched in low complexity; the sequence is STSSSQSASDKSPIK. 2 stretches are compositionally biased toward polar residues: residues 1720 to 1743 and 1801 to 1816; these read KAQT…QSSS and VGQT…HDIL. A compositionally biased stretch (low complexity) spans 1817-1839; that stretch reads SSSLPNRSCSSSPSPSKRPYHPS.

This sequence belongs to the herpesviridae ICP4 family. In terms of processing, a long stretch of serine residues may be a major site of phosphorylation.

The protein resides in the host nucleus. This IE protein is a multifunctional protein capable of migrating to the nucleus, binding to DNA, trans-activating other viral genes, and autoregulating its own synthesis. It is required for the switch from immediate-early to early mode of gene expression. The sequence is that of Major viral transcription factor ICP4 homolog (MDV084) from Gallus gallus (Chicken).